Here is a 130-residue protein sequence, read N- to C-terminus: Small ribosomal subunit protein uS9 (130 aa).

Residues 109–130 (RAKERKKYGLKAARRAPQFSKR) are disordered. Residues 111–130 (KERKKYGLKAARRAPQFSKR) are compositionally biased toward basic residues.

It belongs to the universal ribosomal protein uS9 family.

This chain is Small ribosomal subunit protein uS9, found in Heliobacterium modesticaldum (strain ATCC 51547 / Ice1).